The sequence spans 355 residues: WAT1-related protein At1g25270 (355 aa).

10 consecutive transmembrane segments (helical) span residues 4–24, 33–53, 65–85, 94–114, 134–154, 175–195, 207–227, 244–264, 272–292, and 297–317; these read VVAM…FKIT, VLVA…ALIF, LLLL…ILYL, TFSA…GLVF, LLGA…IHIW, VSIL…LWLL, LYWN…IIAL, LLAT…LVAW, LFVT…GSFA, and LHLG…LVVW. One can recognise an EamA 1 domain in the interval 12 to 142; that stretch reads FIFAGMFILF…TLLGACGALV (131 aa). The EamA 2 domain maps to 210 to 316; sequence NTSLMNGVGS…IMVGGVYLVV (107 aa).

This sequence belongs to the drug/metabolite transporter (DMT) superfamily. Plant drug/metabolite exporter (P-DME) (TC 2.A.7.4) family.

The protein resides in the membrane. This is WAT1-related protein At1g25270 from Arabidopsis thaliana (Mouse-ear cress).